We begin with the raw amino-acid sequence, 140 residues long: Proline-rich nuclear receptor coactivator 2 (140 aa).

The disordered stretch occupies residues Met1–Ser81. Composition is skewed to polar residues over residues Asp11–Lys38 and Ala59–Ser81. Residues Ser100–Ser106 carry the SH3-binding motif.

It belongs to the PNRC family. PNRC2 subfamily. In terms of assembly, interacts with UPF1/RENT1; preferentially interacts with hyperphosphorylated form. Interacts with DCP1A. Interacts with many nuclear receptors including ESR1, ESRRA, ESRRG, NR3C1/GR, NR5A1, PGR, TR, RAR and RXR. As to expression, strong expression is detected in lung, spleen, ovary, thymus, and colon.

Its subcellular location is the nucleus. It is found in the cytoplasm. It localises to the P-body. Functionally, involved in nonsense-mediated mRNA decay (NMD) by acting as a bridge between the mRNA decapping complex and the NMD machinery. May act by targeting the NMD machinery to the P-body and recruiting the decapping machinery to aberrant mRNAs. Required for UPF1/RENT1 localization to the P-body. Plays a role in glucocorticoid receptor-mediated mRNA degradation by interacting with the glucocorticoid receptor NR3C1 in a ligand-dependent manner when it is bound to the 5' UTR of target mRNAs and recruiting the RNA helicase UPF1 and the mRNA-decapping enzyme DCP1A, leading to RNA decay. Also acts as a nuclear receptor coactivator. May play a role in controlling the energy balance between energy storage and energy expenditure. The sequence is that of Proline-rich nuclear receptor coactivator 2 (Pnrc2) from Mus musculus (Mouse).